A 376-amino-acid polypeptide reads, in one-letter code: Cytochrome b-c1 complex subunit 2, mitochondrial (376 aa).

The transit peptide at 1–16 (MLSRVSARSYSSAAQS) directs the protein to the mitochondrion.

Belongs to the peptidase M16 family. UQCRC2/QCR2 subfamily. As to quaternary structure, component of the ubiquinol-cytochrome c oxidoreductase (cytochrome b-c1 complex, complex III, CIII), a multisubunit enzyme composed of 3 respiratory subunits cytochrome b, cytochrome c1 and Rieske protein, 2 core protein subunits, and additional low-molecular weight protein subunits. The complex exists as an obligatory dimer and forms supercomplexes (SCs) in the inner mitochondrial membrane with cytochrome c oxidase (complex IV, CIV).

The protein localises to the mitochondrion inner membrane. Functionally, component of the ubiquinol-cytochrome c oxidoreductase, a multisubunit transmembrane complex that is part of the mitochondrial electron transport chain which drives oxidative phosphorylation. The respiratory chain contains 3 multisubunit complexes succinate dehydrogenase (complex II, CII), ubiquinol-cytochrome c oxidoreductase (cytochrome b-c1 complex, complex III, CIII) and cytochrome c oxidase (complex IV, CIV), that cooperate to transfer electrons derived from NADH and succinate to molecular oxygen, creating an electrochemical gradient over the inner membrane that drives transmembrane transport and the ATP synthase. The cytochrome b-c1 complex catalyzes electron transfer from ubiquinol to cytochrome c, linking this redox reaction to translocation of protons across the mitochondrial inner membrane, with protons being carried across the membrane as hydrogens on the quinol. In the process called Q cycle, 2 protons are consumed from the matrix, 4 protons are released into the intermembrane space and 2 electrons are passed to cytochrome c. The protein is Cytochrome b-c1 complex subunit 2, mitochondrial (QCR2) of Debaryomyces hansenii (strain ATCC 36239 / CBS 767 / BCRC 21394 / JCM 1990 / NBRC 0083 / IGC 2968) (Yeast).